The following is a 149-amino-acid chain: AKELSEKQIAEIKDAFDMFDIDGDGQITSKELRSVMKSLGRTPSDAELEEMIREVDTDGNGTIEYAEFVEMMAKQMGPTDPEKEMREAFRVFDKDGNGLITAAELRQVMANFSDEKLTSEEISEMIREADIDGDGMVNYEEFVKMMTPK.

At alanine 1 the chain carries N-acetylalanine. 4 EF-hand domains span residues 7-42, 43-78, 80-115, and 117-149; these read KQIA…LGRT, PSDA…QMGP, DPEK…FSDE, and LTSE…MTPK. Aspartate 20, aspartate 22, aspartate 24, glutamine 26, glutamate 31, aspartate 56, aspartate 58, asparagine 60, threonine 62, glutamate 67, aspartate 93, aspartate 95, asparagine 97, glutamate 104, aspartate 130, aspartate 132, aspartate 134, methionine 136, and glutamate 141 together coordinate Ca(2+).

The protein belongs to the calmodulin family.

Its function is as follows. Not known. This protein has four functional calcium-binding sites. The chain is Squidulin from Doryteuthis pealeii (Longfin inshore squid).